An 804-amino-acid polypeptide reads, in one-letter code: MGYNHKEIEKKWQNYWADNKTFKTSDNLGQKKFYALDMFPYPSGAGLHVGHPEGYTATDIVSRYKRMQGYNVLHPMGWDAFGLPAEQYALDTGNDPREFTKQNIQTFKRQIQELGFSYDWDREVNTTDPEYYKWTQWIFIQLYNKGLAYVDEVAVNWCPALGTVLSNEEVVDGVSERGGHPVYRRPMKQWVLKITEYADRLLEDLDELDWPESIKDMQRNWIGRSEGARVSFEIENKDASIDVFTTRPDTIYGTTFLVLSPEHSLVNEITSEDKLEAVKKYQEDSSKKSDLERTDLAKDKSGVFTGAYAINPLTGKKLPIWIADYVLSSYGTGAVMAVPAHDERDYEFASKFNLPINEVIAGGDIQKEAYTGVGEHINSGELNGLDNETAISKAIELLVAKGAGEKKVNYKLRDWLFSRQRYWGEPIPVIHWEDGTMTTVPEEELPLLLPETDEIKPSGTGESPLANIDEFVNVIDEKTGMKGRRETNTMPQWAGSCWYYLRYIDPHNSNMLADPEKLKHWLPVDLYIGGVEHAVLHLLYARFWHKVLYDLGVVPTKEPFQKLFNQGMILGEGNEKMSKSKGNVVNPDDIVDSHGADTLRLYEMFMGPLDAAIAWSENGLDGSRRFLDRVWRLFINEDGSLSNKIVENNDNGLDKVYNQTVKKVTEDFNTLNFNTAISQLMVFINDCYKAETIYQPYAEGFVKMLAPIAPHIGEELWDRLGNEDTITYQPWPTYDESLLVDSEVEIVVQVNGKVRAKLNIPKDTSKDEMEALALKDENVKLSIEGKDIKKVIAVPQKLVNIVAK.

The 'HIGH' region motif lies at Pro-40–His-51. The short motif at Lys-576–Ser-580 is the 'KMSKS' region element. Position 579 (Lys-579) interacts with ATP.

This sequence belongs to the class-I aminoacyl-tRNA synthetase family.

The protein localises to the cytoplasm. It carries out the reaction tRNA(Leu) + L-leucine + ATP = L-leucyl-tRNA(Leu) + AMP + diphosphate. This is Leucine--tRNA ligase from Staphylococcus haemolyticus (strain JCSC1435).